Here is an 84-residue protein sequence, read N- to C-terminus: Cell division topological specificity factor (84 aa).

Belongs to the MinE family.

Prevents the cell division inhibition by proteins MinC and MinD at internal division sites while permitting inhibition at polar sites. This ensures cell division at the proper site by restricting the formation of a division septum at the midpoint of the long axis of the cell. The chain is Cell division topological specificity factor from Granulibacter bethesdensis (strain ATCC BAA-1260 / CGDNIH1).